Reading from the N-terminus, the 61-residue chain is Small ribosomal subunit protein bS21 (61 aa).

It belongs to the bacterial ribosomal protein bS21 family.

The polypeptide is Small ribosomal subunit protein bS21 (Methylacidiphilum infernorum (isolate V4) (Methylokorus infernorum (strain V4))).